A 473-amino-acid polypeptide reads, in one-letter code: Photosystem II CP43 reaction center protein (473 aa).

Positions 1 to 14 (MKTLYSLRRFYHVE) are excised as a propeptide. Threonine 15 bears the N-acetylthreonine mark. Threonine 15 carries the post-translational modification Phosphothreonine. The next 5 membrane-spanning stretches (helical) occupy residues 69-93 (LFEVAHFVPEKPMYEQGLILLPHLA), 134-155 (LLGPETLEESFPFFGYVWKDRN), 178-200 (KALYFGGVYDTWAPGGGDVRKIT), 255-275 (KPFAWARRAFVWSGEAYLSYS), and 291-312 (WFNNTAYPSEFYGPTGPEASQA). [CaMn4O5] cluster is bound at residue glutamate 367. The helical transmembrane segment at 447 to 471 (RARAAAAGFEKGIDRDFEPVLSMTP) threads the bilayer.

It belongs to the PsbB/PsbC family. PsbC subfamily. As to quaternary structure, PSII is composed of 1 copy each of membrane proteins PsbA, PsbB, PsbC, PsbD, PsbE, PsbF, PsbH, PsbI, PsbJ, PsbK, PsbL, PsbM, PsbT, PsbX, PsbY, PsbZ, Psb30/Ycf12, at least 3 peripheral proteins of the oxygen-evolving complex and a large number of cofactors. It forms dimeric complexes. Binds multiple chlorophylls and provides some of the ligands for the Ca-4Mn-5O cluster of the oxygen-evolving complex. It may also provide a ligand for a Cl- that is required for oxygen evolution. PSII binds additional chlorophylls, carotenoids and specific lipids. is required as a cofactor.

The protein localises to the plastid. Its subcellular location is the chloroplast thylakoid membrane. Functionally, one of the components of the core complex of photosystem II (PSII). It binds chlorophyll and helps catalyze the primary light-induced photochemical processes of PSII. PSII is a light-driven water:plastoquinone oxidoreductase, using light energy to abstract electrons from H(2)O, generating O(2) and a proton gradient subsequently used for ATP formation. This is Photosystem II CP43 reaction center protein from Ipomoea purpurea (Common morning glory).